Here is a 188-residue protein sequence, read N- to C-terminus: dITP/XTP pyrophosphatase (188 aa).

10 to 15 (TSNPHK) contacts substrate. Mg(2+) is bound by residues E39 and D69. The Proton acceptor role is filled by D69. Residues S70, 145 to 148 (FGFD), K168, and 173 to 174 (HR) contribute to the substrate site.

Belongs to the HAM1 NTPase family. In terms of assembly, homodimer. The cofactor is Mg(2+).

The enzyme catalyses XTP + H2O = XMP + diphosphate + H(+). It catalyses the reaction dITP + H2O = dIMP + diphosphate + H(+). It carries out the reaction ITP + H2O = IMP + diphosphate + H(+). Its function is as follows. Pyrophosphatase that catalyzes the hydrolysis of nucleoside triphosphates to their monophosphate derivatives, with a high preference for the non-canonical purine nucleotides XTP (xanthosine triphosphate), dITP (deoxyinosine triphosphate) and ITP. Seems to function as a house-cleaning enzyme that removes non-canonical purine nucleotides from the nucleotide pool, thus preventing their incorporation into DNA/RNA and avoiding chromosomal lesions. The protein is dITP/XTP pyrophosphatase of Ignicoccus hospitalis (strain KIN4/I / DSM 18386 / JCM 14125).